Consider the following 264-residue polypeptide: Small ribosomal subunit protein eS1 (264 aa).

Residues 232–264 (HGEGGGAGKPSGDEAGTKVERADGYEPPVQESV) are disordered. Residues 242–255 (SGDEAGTKVERADG) are compositionally biased toward basic and acidic residues.

Belongs to the eukaryotic ribosomal protein eS1 family. As to quaternary structure, component of the small ribosomal subunit. Mature ribosomes consist of a small (40S) and a large (60S) subunit. The 40S subunit contains about 33 different proteins and 1 molecule of RNA (18S). The 60S subunit contains about 49 different proteins and 3 molecules of RNA (28S, 5.8S and 5S). Part of the small subunit (SSU) processome, composed of more than 70 proteins and the RNA chaperone small nucleolar RNA (snoRNA) U3.

Its subcellular location is the cytoplasm. The protein resides in the nucleus. It localises to the nucleolus. Its function is as follows. Component of the small ribosomal subunit. The ribosome is a large ribonucleoprotein complex responsible for the synthesis of proteins in the cell. Part of the small subunit (SSU) processome, first precursor of the small eukaryotic ribosomal subunit. During the assembly of the SSU processome in the nucleolus, many ribosome biogenesis factors, an RNA chaperone and ribosomal proteins associate with the nascent pre-rRNA and work in concert to generate RNA folding, modifications, rearrangements and cleavage as well as targeted degradation of pre-ribosomal RNA by the RNA exosome. May play a role during erythropoiesis. This Taeniopygia guttata (Zebra finch) protein is Small ribosomal subunit protein eS1.